Reading from the N-terminus, the 106-residue chain is Small ribosomal subunit protein uS10 (106 aa).

The protein belongs to the universal ribosomal protein uS10 family. In terms of assembly, part of the 30S ribosomal subunit.

Its function is as follows. Involved in the binding of tRNA to the ribosomes. The protein is Small ribosomal subunit protein uS10 of Wolbachia sp. subsp. Drosophila simulans (strain wRi).